A 514-amino-acid polypeptide reads, in one-letter code: Peptide chain release factor 3 (514 aa).

A tr-type G domain is found at 8 to 268; it reads KKRRTFAIIS…TFLEFAPEPH (261 aa). GTP contacts are provided by residues 17 to 24, 85 to 89, and 139 to 142; these read SHPDAGKT, DTPGH, and NKLD.

This sequence belongs to the TRAFAC class translation factor GTPase superfamily. Classic translation factor GTPase family. PrfC subfamily.

The protein localises to the cytoplasm. In terms of biological role, increases the formation of ribosomal termination complexes and stimulates activities of RF-1 and RF-2. It binds guanine nucleotides and has strong preference for UGA stop codons. It may interact directly with the ribosome. The stimulation of RF-1 and RF-2 is significantly reduced by GTP and GDP, but not by GMP. The protein is Peptide chain release factor 3 of Streptococcus pyogenes serotype M2 (strain MGAS10270).